Here is a 102-residue protein sequence, read N- to C-terminus: NADH-quinone oxidoreductase subunit K (102 aa).

3 helical membrane passes run 5–25 (LAHY…GIFL), 31–51 (IILL…FVAF), and 62–82 (VFVF…LAIL).

Belongs to the complex I subunit 4L family. As to quaternary structure, NDH-1 is composed of 14 different subunits. Subunits NuoA, H, J, K, L, M, N constitute the membrane sector of the complex.

The protein localises to the cell inner membrane. The catalysed reaction is a quinone + NADH + 5 H(+)(in) = a quinol + NAD(+) + 4 H(+)(out). Its function is as follows. NDH-1 shuttles electrons from NADH, via FMN and iron-sulfur (Fe-S) centers, to quinones in the respiratory chain. The immediate electron acceptor for the enzyme in this species is believed to be ubiquinone. Couples the redox reaction to proton translocation (for every two electrons transferred, four hydrogen ions are translocated across the cytoplasmic membrane), and thus conserves the redox energy in a proton gradient. This Bordetella parapertussis (strain 12822 / ATCC BAA-587 / NCTC 13253) protein is NADH-quinone oxidoreductase subunit K.